Reading from the N-terminus, the 1161-residue chain is Nuclear receptor-interacting protein 1 (1161 aa).

Positions 1–416 (MTHGEELGSD…FESSTPTTID (416 aa)) are interaction with ZNF366. The LXXLL motif 1 signature appears at 21-25 (LEGLL). Residues 34–68 (GTAINKKSAGHKEEDQNFNLSGSAFPSCQSNGPTV) are disordered. Over residues 50–68 (NFNLSGSAFPSCQSNGPTV) the composition is skewed to polar residues. The segment at 78–335 (MLHLKKARLL…LNGQARALPA (258 aa)) is repression domain 1. A Phosphoserine modification is found at Ser-104. Lys-111 carries the post-translational modification N6-acetyllysine; alternate. Lys-111 is covalently cross-linked (Glycyl lysine isopeptide (Lys-Gly) (interchain with G-Cter in SUMO2); alternate). The LXXLL motif 2 signature appears at 133–137 (LASLL). Lys-158 carries the post-translational modification N6-acetyllysine. Lys-170 is covalently cross-linked (Glycyl lysine isopeptide (Lys-Gly) (interchain with G-Cter in SUMO2)). An LXXLL motif 3 motif is present at residues 185–189 (LKTLL). Glycyl lysine isopeptide (Lys-Gly) (interchain with G-Cter in SUMO2) cross-links involve residues Lys-195 and Lys-198. At Thr-207 the chain carries Phosphothreonine. Ser-218 bears the Phosphoserine mark. Residues 267–271 (LALLL) carry the LXXLL motif 4 motif. Residues Lys-287 and Lys-311 each carry the N6-acetyllysine modification. Ser-358 carries the post-translational modification Phosphoserine. Residue Lys-374 forms a Glycyl lysine isopeptide (Lys-Gly) (interchain with G-Cter in SUMO2) linkage. Phosphoserine is present on Ser-380. The LXXLL motif 5 signature appears at 382–386 (LLHLL). Positions 393-436 (TPMNGHSQNERASSFESSTPTTIDEYSDNNPSFTDDSSGDESSY) are disordered. Residues 411 to 701 (TPTTIDEYSD…PAGPEPGLPG (291 aa)) are repression domain 2. A required for targeting to small nuclear foci region spans residues 432-473 (DESSYSNCVPIDLSCKHRIEKPEAERPVSLENLTQSLLNTWD). Residues 441–447 (PIDLSCK) carry the CTBP-binding; principal site motif. Lys-447 and Lys-482 each carry N6-acetyllysine. A Phosphoserine modification is found at Ser-488. The LXXLL motif 6 motif lies at 501-505 (LLQLL). Lys-509 is covalently cross-linked (Glycyl lysine isopeptide (Lys-Gly) (interchain with G-Cter in SUMO2)). Positions 517-552 (NASPQDIHSDGTKFSPQNYTRTSVIESPSTNRTTPV) are enriched in polar residues. The interval 517–559 (NASPQDIHSDGTKFSPQNYTRTSVIESPSTNRTTPVSTPPLYT) is disordered. Ser-519 carries the phosphoserine modification. N6-acetyllysine is present on Lys-529. Phosphoserine occurs at positions 531, 543, and 565. The short motif at 566 to 570 (PINLS) is the CTBP-binding element. 3 disordered regions span residues 604–623 (TKGKESQAEKPAPSEGAQNS), 639–702 (GLQS…LPGC), and 717–747 (LLGNSSKGKNEKKEKTPARDEAPQEHSERAA). Position 607 is an N6-acetyllysine (Lys-607). Ser-672 is modified (phosphoserine). An LXXLL motif 7 motif is present at residues 714–718 (LQLLL). Basic and acidic residues predominate over residues 724–747 (GKNEKKEKTPARDEAPQEHSERAA). Residues 736-886 (DEAPQEHSER…TAVDTANHHS (151 aa)) form a repression domain 3 region. An interaction with ZNF366 region spans residues 754–1161 (VKIKSEPCDD…NALTIKKESE (408 aa)). Glycyl lysine isopeptide (Lys-Gly) (interchain with G-Cter in SUMO2) cross-links involve residues Lys-757 and Lys-803. Ser-808 carries the post-translational modification Phosphoserine. The LXXLL motif 8 signature appears at 820–824 (LSRLL). Residues 829–848 (ESYPADEQDKSHRNSELPTL) form a disordered region. Residues Lys-851 and Lys-902 each participate in a glycyl lysine isopeptide (Lys-Gly) (interchain with G-Cter in SUMO2) cross-link. An N6-acetyllysine; alternate modification is found at Lys-932. Lys-932 is covalently cross-linked (Glycyl lysine isopeptide (Lys-Gly) (interchain with G-Cter in SUMO2); alternate). The LXXLL motif 9 signature appears at 937–941 (LKQLL). The short motif at 947-951 (VRDLS) is the CTBP-binding element. The segment covering 950–962 (LSPHRSDSVPDTK) has biased composition (basic and acidic residues). The interval 950-976 (LSPHRSDSVPDTKKKGHKNNAPGSKPE) is disordered. The residue at position 1003 (Ser-1003) is a Phosphoserine. The tract at residues 1063–1076 (LTKTNPILYYMLQK) is ligand-dependent nuclear receptor binding. Residues Lys-1108, Lys-1118, and Lys-1157 each participate in a glycyl lysine isopeptide (Lys-Gly) (interchain with G-Cter in SUMO2) cross-link. Residues 1121–1161 (FFNLRSPYNSHMGNNASRPHSTNGEVYGLLGNALTIKKESE) form a repression domain 4 region.

As to quaternary structure, interacts with CTBP1, CTBP2, ERS1, HDAC1, HDAC2, HDAC5, HDAC6, NR2C2, NR3C1, NR3C2, YWHAH, JUN and FOS. Found in a complex with both NR3C1 and YWHAH. Interacts with NR2C1 (sumoylated form and via the ligand-binding domain); the interaction results in promoting the repressor activity of NR2C1. Interacts with RARA and RXRB homodimers and RARA/RXRB heterodimers in the presence of ligand. Interacts with HDAC1 and HDAC3 via its N-terminal domain. Interacts with ZNF366. Interacts with RORA. Post-translationally, acetylation abolishes interaction with CTBP1. Phosphorylation enhances interaction with YWHAH. Acetylation regulates its nuclear translocation and corepressive activity. In terms of tissue distribution, expressed in the embryonic placenta. In the adult, expression is strong in the testis and brain. Also expressed at a high level in the white adipose tissue. Expressed constantly but at a weaker level in the adult heart, lung, stomach and kidney. Expressed moderately in the skeletal muscle. Expressed at a low level in the adult spleen, liver and brown adipose tissue. Expressed in the ovary at a high level in granulosa cells and at a lower level in the thecal and interstitial compartments.

The protein localises to the nucleus. Modulates transcriptional repression by nuclear hormone receptors such as NR2C1, thyroid hormone receptor and retinoic acid receptor/RARA. Essential for cumulus expansion and follicle rupture during ovulation. Also controls the balance between fat accumulation and energy expenditure. Positive regulator of the circadian clock gene expression: stimulates transcription of BMAL1, CLOCK and CRY1 by acting as a coactivator for RORA and RORC. Involved in the regulation of ovarian function. Plays a role in renal development. This chain is Nuclear receptor-interacting protein 1, found in Mus musculus (Mouse).